A 351-amino-acid polypeptide reads, in one-letter code: Keratocan (351 aa).

The N-terminal stretch at 1–20 (MATPNCLILWVLLIADTVWT) is a signal peptide. The region spanning 34–72 (DWDVHDDFYCPRECFCPPSFPTALYCENRGLTEIPPIPS) is the LRRNT domain. 2 cysteine pairs are disulfide-bonded: Cys-43–Cys-49 and Cys-47–Cys-59. LRR repeat units lie at residues 73-94 (RIWY…PFEN), 97-118 (QLRW…KGAL), 123-143 (KLLF…PLPR), 144-165 (SLEQ…TFSN), 168-181 (NLTL…KLLD), 194-214 (NLMQ…RLPA), 215-236 (NTMQ…YFNV), 239-259 (KVAF…PSRG), 264-283 (SILD…RINA), and 284-305 (NLQH…VICP). N-linked (GlcNAc...) (keratan sulfate) asparagine glycosylation occurs at Asn-94. A glycan (N-linked (GlcNAc...) (keratan sulfate) asparagine) is linked at Asn-168. N-linked (GlcNAc...) asparagine glycosylation is present at Asn-223. N-linked (GlcNAc...) asparagine glycosylation is present at Asn-299. A disulfide bond links Cys-304 and Cys-342.

Belongs to the small leucine-rich proteoglycan (SLRP) family. SLRP class II subfamily. Binds keratan sulfate chains. As to expression, selectively expressed in cornea of adult where it is detected in keratocytes but not in scleral cells. In embryo, first detected in periocular mesenchymal cells migrating toward developing cornea on 13.5 dpc; expression gradually restricted to corneal stromal cells on 14.5 to 18.5 dpc. Detected in scleral cells of 15.5 dpc but not in 18.5 dpc embryos.

It localises to the secreted. The protein localises to the extracellular space. It is found in the extracellular matrix. Its function is as follows. May be important in developing and maintaining corneal transparency and for the structure of the stromal matrix. The chain is Keratocan (Kera) from Mus musculus (Mouse).